Reading from the N-terminus, the 280-residue chain is Manganese transport system membrane protein MntC (280 aa).

9 consecutive transmembrane segments (helical) span residues 16–36, 41–61, 62–82, 92–112, 137–157, 168–188, 193–213, 221–241, and 244–264; these read ALIT…FIIL, LMGD…YMMG, MNFF…IGFV, TAIG…ISFA, TIII…EFLV, YGLN…LVTV, TVGI…AYLL, IVLA…FSYI, and LASG…AFLF.

This sequence belongs to the ABC-3 integral membrane protein family.

It is found in the cell membrane. Its function is as follows. This protein is probably a component of a manganese permease, a binding protein-dependent, ATP-driven transport system. This is Manganese transport system membrane protein MntC (mntC) from Listeria monocytogenes serovar 1/2a (strain ATCC BAA-679 / EGD-e).